The chain runs to 838 residues: Translation initiation factor IF-2 (838 aa).

A disordered region spans residues 1–235 (MSDTDGKKPL…RSLAAMKREQ (235 aa)). Positions 18-27 (SGQVKQSFSH) are enriched in polar residues. The segment covering 50 to 60 (SGSSTTTSSPS) has biased composition (low complexity). A compositionally biased stretch (basic and acidic residues) spans 88–156 (KLREVDDAKR…AARRAEEAKR (69 aa)). Low complexity predominate over residues 162–177 (PAAAQPDAADSRASAP). Residues 187–208 (SRKEREREADRDRTTKKDDSRR) show a composition bias toward basic and acidic residues. Residues 335–509 (PRPPIITIMG…ELLDLRANPK (175 aa)) enclose the tr-type G domain. Residues 344-351 (GHVDHGKT) are G1. 344 to 351 (GHVDHGKT) contacts GTP. Positions 369-373 (GITQH) are G2. Residues 391 to 394 (DTPG) are G3. GTP contacts are provided by residues 391 to 395 (DTPGH) and 445 to 448 (NKID). The G4 stretch occupies residues 445–448 (NKID). Positions 481–483 (SAK) are G5.

The protein belongs to the TRAFAC class translation factor GTPase superfamily. Classic translation factor GTPase family. IF-2 subfamily.

It is found in the cytoplasm. Functionally, one of the essential components for the initiation of protein synthesis. Protects formylmethionyl-tRNA from spontaneous hydrolysis and promotes its binding to the 30S ribosomal subunits. Also involved in the hydrolysis of GTP during the formation of the 70S ribosomal complex. The sequence is that of Translation initiation factor IF-2 from Cereibacter sphaeroides (strain ATCC 17025 / ATH 2.4.3) (Rhodobacter sphaeroides).